Here is a 546-residue protein sequence, read N- to C-terminus: MDLVSFAFSGPATHADQAPLYIDAKRPSRSLSEAPFRRLVRSLVAGFKAYGVERGDTVLVQLDNLVIHSALLFGIVGAGGVYMGCSPSSPRHELDHFVSLVEPRLILTVASALSVVRDVCTNKGISWSQICLVDDQSVDHLVSFAQNQSYNPQATPPVRDEGVHFDLKDMVSFGESDWMRIYDEATARITPAAMFSTSGTSGLPKAAIRTHHTIISHHQTVHYDVPYPVTRLMALPMSHSFGDFWSNLFPIRYGHPLYVMPRFDLSTFLNVVHRYNITETYLVPAMVHILNQSTLPVRESLGSLFYIGVSGAPIDADSLQRCQKLLNPQACIGQLWGMTEVGVIFQNRYGDQRYPGSIGKLLENYDIRLVRLDDGTTIHGESTPGELYVRGPGIMLAYQGRDDGIDAQGWFRTGDIAYSEDEHYHIVGRTKELIKVRGYSVAPAEIEAVLLKDPRVHDTMVIGITLPDGSTEVPRAYVVCALGQARPTADEVSALALKNLASYKALDGGVIFVESLPRTGIGKPHRSKLSHLDAQRTKLAALLSPV.

194–205 (MFSTSGTSGLPK) is a binding site for AMP. The tract at residues 445–523 (EIEAVLLKDP…ESLPRTGIGK (79 aa)) is AMP-binding.

This sequence belongs to the ATP-dependent AMP-binding enzyme family.

The catalysed reaction is nicotinate + ATP + CoA = nicotinyl-CoA + AMP + diphosphate. It participates in secondary metabolite biosynthesis; terpenoid biosynthesis. In terms of biological role, nicotinic acid-CoA ligase; part of the gene cluster that mediates the biosynthesis of 15-deoxyoxalicine B. The first step of the pathway is the synthesis of nicotinyl-CoA from nicotinic acid by the nicotinic acid-CoA ligase olcI. Nicotinyl-CoA is then a substrate of polyketide synthase olcA to produce 4-hydroxy-6-(3-pyridinyl)-2H-pyran-2-one (HPPO) which is further prenylated by the polyprenyl transferase olcH to yield geranylgeranyl-HPPO. Geranylgeranyl pyrophosphate is provided by the cluster-specific geranylgeranyl pyrophosphate synthase olcC. The FAD-dependent monooxygenase olcE catalyzes the epoxidation of geranylgeranyl-HPPO and the terpene cyclase olcD catalyzes the cyclization of the terpenoid component, resulting in the formation of the tricyclic terpene moiety seen in predecaturin E. The cytochrome P450 monooxygenase then catalyzes the allylic oxidation of predecaturin E, which is followed by spirocylization with concomitant loss of one molecule of water to form decaturin E. Decaturin E is the substrate of the cytochrome P450 monooxygenase olcJ which hydroxylates it at the C-29 position to form decaturin F. The short-chain dehydrogenase/reductase olcF may catalyze the oxidation of decaturin F to generate the 29-hydroxyl-27-one intermediate, and subsequent hemiacetal formation probably leads to the formation of decaturin C. The dioxygenase olcK may be a peroxisomal enzyme that catalyzes the hydroxylation of decaturin C into decaturin A once decaturin C is shuttled into the peroxisome by the MFS transporter olcL. Finally the cytochrome P450 monooxygenase olcB catalyzes the oxidative rearrangement to yield 15-deoxyoxalicine B. In the absence of olcJ, decaturin E may be shunted to a pathway in which it is oxidized to a ketone, possibly by olcF, to form decaturin D, which undergoes further allylic oxidation to yield decaturin G. Moreover, in the absence of oclK or oclL, oclB can convert decaturin C into 15-deoxyoxalicine A. In Penicillium canescens, this protein is Nicotinic acid-CoA ligase olcI.